The following is a 145-amino-acid chain: Large ribosomal subunit protein uL15 (145 aa).

The segment at 1–43 (MRLNTIKPGAGSKSAAKRVGRGIGSGLGKTCGRGHKGQKSRAG) is disordered. Residues 21 to 31 (RGIGSGLGKTC) show a composition bias toward gly residues.

Belongs to the universal ribosomal protein uL15 family. Part of the 50S ribosomal subunit.

In terms of biological role, binds to the 23S rRNA. This is Large ribosomal subunit protein uL15 from Aromatoleum aromaticum (strain DSM 19018 / LMG 30748 / EbN1) (Azoarcus sp. (strain EbN1)).